A 94-amino-acid polypeptide reads, in one-letter code: CRISPR-associated endoribonuclease Cas2 (94 aa).

D11 serves as a coordination point for Mg(2+).

It belongs to the CRISPR-associated endoribonuclease Cas2 protein family. Homodimer, forms a heterotetramer with a Cas1 homodimer. Mg(2+) serves as cofactor.

Its function is as follows. CRISPR (clustered regularly interspaced short palindromic repeat), is an adaptive immune system that provides protection against mobile genetic elements (viruses, transposable elements and conjugative plasmids). CRISPR clusters contain sequences complementary to antecedent mobile elements and target invading nucleic acids. CRISPR clusters are transcribed and processed into CRISPR RNA (crRNA). Functions as a ssRNA-specific endoribonuclease. Involved in the integration of spacer DNA into the CRISPR cassette. In Thermus thermophilus (strain ATCC 27634 / DSM 579 / HB8), this protein is CRISPR-associated endoribonuclease Cas2.